We begin with the raw amino-acid sequence, 173 residues long: NADH-ubiquinone oxidoreductase chain 6 (173 aa).

The next 5 membrane-spanning stretches (helical) occupy residues Met1–Ser21, Pro25–Gly45, Leu53–Leu73, Val87–Gly107, and Leu139–Leu159.

Belongs to the complex I subunit 6 family.

The protein localises to the mitochondrion membrane. The catalysed reaction is a ubiquinone + NADH + 5 H(+)(in) = a ubiquinol + NAD(+) + 4 H(+)(out). Core subunit of the mitochondrial membrane respiratory chain NADH dehydrogenase (Complex I) that is believed to belong to the minimal assembly required for catalysis. Complex I functions in the transfer of electrons from NADH to the respiratory chain. The immediate electron acceptor for the enzyme is believed to be ubiquinone. The protein is NADH-ubiquinone oxidoreductase chain 6 (MT-ND6) of Gadus morhua (Atlantic cod).